Consider the following 557-residue polypeptide: Organic cation/carnitine transporter 2 (557 aa).

Residues 1–20 (MRDYDEVTAFLGEWGPFQRL) lie on the Cytoplasmic side of the membrane. Residues 21–41 (IFFLLSASIIPNGFNGMSIVF) form a helical membrane-spanning segment. Residues 42-142 (LAGTPEHRCL…DLVCKDDWKA (101 aa)) are Extracellular-facing. Asparagine 57, asparagine 64, and asparagine 91 each carry an N-linked (GlcNAc...) asparagine glycan. The helical transmembrane segment at 143–163 (PLTTSLFFVGVLMGSFISGQL) threads the bilayer. The Cytoplasmic portion of the chain corresponds to 164 to 172 (SDRFGRKNV). A helical membrane pass occupies residues 173 to 193 (LFLTMGMQTGFSFLQVFSVNF). At 194–197 (EMFT) the chain is on the extracellular side. The helical transmembrane segment at 198–218 (VLFVLVGMGQISNYVAAFVLG) threads the bilayer. 218–225 (GTEILSKS) contacts ATP. The Cytoplasmic portion of the chain corresponds to 219 to 232 (TEILSKSIRIIFAT). A helical membrane pass occupies residues 233 to 253 (LGVCIFYAFGFMVLPLFAYFI). The Extracellular segment spans residues 254–257 (RDWR). Residues 258-278 (MLLLALTVPGVLCGALWWFIP) form a helical membrane-spanning segment. Residues 279 to 341 (ESPRWLISQG…YDLIRTRNIR (63 aa)) lie on the Cytoplasmic side of the membrane. A helical transmembrane segment spans residues 342 to 362 (VITIMSIILWLTISVGYFGLS). Residues 363–373 (LDTPNLHGDIY) are Extracellular-facing. Residues 374–394 (VNCFLLAAVEVPAYVLAWLLL) traverse the membrane as a helical segment. Over 395–406 (QYLPRRYSISAA) the chain is Cytoplasmic. The helical transmembrane segment at 407-427 (LFLGGSVLLFMQLVPSELFYL) threads the bilayer. At 428 to 430 (STA) the chain is on the extracellular side. Residues 431 to 451 (LVMVGKFGITSAYSMVYVYTA) form a helical membrane-spanning segment. Residues 452 to 462 (ELYPTVVRNMG) are Cytoplasmic-facing. A helical transmembrane segment spans residues 463-483 (VGVSSTASRLGSILSPYFVYL). Over 484-488 (GAYDR) the chain is Extracellular. Tyrosine 486 is modified (phosphotyrosine). The helical transmembrane segment at 489–509 (FLPYILMGSLTILTAILTLFF) threads the bilayer. Over 510–557 (PESFGVPLPDTIDQMLRVKGIKQWQIQSQTRMQKDGEESPTVLKSTAF) the chain is Cytoplasmic. Serine 548 carries the post-translational modification Phosphoserine. A Phosphothreonine modification is found at threonine 550.

This sequence belongs to the major facilitator (TC 2.A.1) superfamily. Organic cation transporter (TC 2.A.1.19) family. Interacts with PDZK1. In terms of tissue distribution, widely expressed. Expressed in kidney, liver and testis. Expressed at the brush border of the small, large intestine and colon (at protein level).

The protein resides in the apical cell membrane. It localises to the basal cell membrane. It is found in the cell membrane. The enzyme catalyses (R)-carnitine(out) + Na(+)(out) = (R)-carnitine(in) + Na(+)(in). The catalysed reaction is glycine betaine(out) + Na(+)(out) = glycine betaine(in) + Na(+)(in). It carries out the reaction glycine betaine(out) + (R)-carnitine(in) = glycine betaine(in) + (R)-carnitine(out). It catalyses the reaction O-butanoyl-(R)-carnitine(out) + Na(+)(out) = O-butanoyl-(R)-carnitine(in) + Na(+)(in). The enzyme catalyses O-acetyl-(R)-carnitine(out) + Na(+)(out) = O-acetyl-(R)-carnitine(in) + Na(+)(in). The catalysed reaction is O-propanoyl-(R)-carnitine(out) + Na(+)(out) = O-propanoyl-(R)-carnitine(in) + Na(+)(in). It carries out the reaction (S)-carnitine(out) + Na(+)(out) = (S)-carnitine(in) + Na(+)(in). It catalyses the reaction an O-acyl-(R)-carnitine(out) + Na(+)(out) = an O-acyl-(R)-carnitine(in) + Na(+)(in). The enzyme catalyses L-glutamyl-L-arginyl-glycyl-L-methionyl-L-threonine(out) + Na(+)(out) = L-glutamyl-L-arginyl-glycyl-L-methionyl-L-threonine(in) + Na(+)(in). The catalysed reaction is N,N-dimethylglycine(out) + Na(+)(out) = N,N-dimethylglycine(in) + Na(+)(in). Inhibited by emetine, quinidine and verapamil. The IC(50) of emetine is 4.2 uM. Not inhibited by valproic acid. Transport of (R)-carnitine is stimulated by cholesterol in the plasma membrane. Functionally, sodium-ion dependent, high affinity carnitine transporter. Involved in the active cellular uptake of carnitine. Transports one sodium ion with one molecule of carnitine. Also transports organic cations such as tetraethylammonium (TEA) without the involvement of sodium. Also relative uptake activity ratio of carnitine to TEA is 11.3. May also contribute to regulate the transport of organic compounds in testis across the blood-testis-barrier. The protein is Organic cation/carnitine transporter 2 of Mus musculus (Mouse).